A 542-amino-acid polypeptide reads, in one-letter code: Protein OS-9 homolog (542 aa).

Residues 1-21 (MQAKIIYALSAISALIPLGSS) form the signal peptide. N52 and N74 each carry an N-linked (GlcNAc...) asparagine glycan. Intrachain disulfides connect C70-C258, C117-C130, C193-C227, and C208-C239. One can recognise an MRH domain in the interval 115-241 (ERCIFYQAGF…QVTIPELCNL (127 aa)). W125, Q137, D194, R200, E223, and Y229 together coordinate a mannooligosaccharide derivative. N380 carries an N-linked (GlcNAc...) asparagine glycan. A disordered region spans residues 497-528 (NARMDDDESTSHTTRDIGEAGSQTTGNTESEV). The segment covering 505-514 (STSHTTRDIG) has biased composition (basic and acidic residues). Residues 517 to 528 (GSQTTGNTESEV) show a composition bias toward polar residues. The short motif at 539 to 542 (HDEL) is the Prevents secretion from ER element.

It belongs to the OS-9 family. Homodimer. Component of the HRD1 ubiquitin ligase complex which contains the E3 ligase HRD1, its cofactors HRD3, USA1 and DER1, substrate recruiting factor YOS9 and CDC48-binding protein UBX2. Within the complex, interacts (via N-terminus) with HRD3. In ERAD-L, HRD3 and YOS9 jointly bind misfolded glycoproteins in the endoplasmic reticulum (ER) lumen. Movement of ERAD-L substrates through the ER membrane is facilitated by HRD1 and DER1 which have lateral gates facing each other and which distort the membrane region between the lateral gates, making it much thinner than a normal phospholipid bilayer. Substrates insert into the membrane as a hairpin loop with one strand interacting with DER1 and the other with HRD1. The HRD1 complex interacts with the heterotrimeric CDC48-NPL4-UFD1 ATPase complex which is recruited by UBX2 via its interaction with CDC48 and which moves ubiquitinated substrates to the cytosol for targeting to the proteasome. Interacts with KAR2 and EMP47. Interacts with misfolded ER lumenal proteins like PCR1. Interacts with the GPI-anchored proteins GAS1 and MKC7.

The protein resides in the endoplasmic reticulum membrane. Its function is as follows. Lectin involved in the quality control of the secretory pathway. As a member of the endoplasmic reticulum-associated degradation lumenal (ERAD-L) surveillance system, targets misfolded endoplasmic reticulum lumenal glycoproteins for degradation. The recognition of targets is N-glycan specific. Functions in recruiting misfolded protein substrates in conjunction with HRD3. The polypeptide is Protein OS-9 homolog (YOS9) (Saccharomyces cerevisiae (strain ATCC 204508 / S288c) (Baker's yeast)).